A 120-amino-acid polypeptide reads, in one-letter code: Large ribosomal subunit protein bL12 (120 aa).

It belongs to the bacterial ribosomal protein bL12 family. In terms of assembly, homodimer. Part of the ribosomal stalk of the 50S ribosomal subunit. Forms a multimeric L10(L12)X complex, where L10 forms an elongated spine to which 2 to 4 L12 dimers bind in a sequential fashion. Binds GTP-bound translation factors.

Functionally, forms part of the ribosomal stalk which helps the ribosome interact with GTP-bound translation factors. Is thus essential for accurate translation. This Listeria innocua serovar 6a (strain ATCC BAA-680 / CLIP 11262) protein is Large ribosomal subunit protein bL12.